The following is a 242-amino-acid chain: Tryptophan synthase alpha chain (242 aa).

Active-site proton acceptor residues include Glu31 and Asp42.

This sequence belongs to the TrpA family. Tetramer of two alpha and two beta chains.

It carries out the reaction (1S,2R)-1-C-(indol-3-yl)glycerol 3-phosphate + L-serine = D-glyceraldehyde 3-phosphate + L-tryptophan + H2O. It functions in the pathway amino-acid biosynthesis; L-tryptophan biosynthesis; L-tryptophan from chorismate: step 5/5. Functionally, the alpha subunit is responsible for the aldol cleavage of indoleglycerol phosphate to indole and glyceraldehyde 3-phosphate. In Staphylococcus aureus (strain bovine RF122 / ET3-1), this protein is Tryptophan synthase alpha chain.